Reading from the N-terminus, the 427-residue chain is Enolase (427 aa).

Glutamine 163 lines the (2R)-2-phosphoglycerate pocket. Residue glutamate 205 is the Proton donor of the active site. Residues aspartate 242, glutamate 285, and aspartate 312 each contribute to the Mg(2+) site. Residues lysine 337, arginine 366, serine 367, and lysine 388 each coordinate (2R)-2-phosphoglycerate. Lysine 337 (proton acceptor) is an active-site residue.

The protein belongs to the enolase family. Mg(2+) is required as a cofactor.

It is found in the cytoplasm. It localises to the secreted. The protein localises to the cell surface. It carries out the reaction (2R)-2-phosphoglycerate = phosphoenolpyruvate + H2O. The protein operates within carbohydrate degradation; glycolysis; pyruvate from D-glyceraldehyde 3-phosphate: step 4/5. In terms of biological role, catalyzes the reversible conversion of 2-phosphoglycerate (2-PG) into phosphoenolpyruvate (PEP). It is essential for the degradation of carbohydrates via glycolysis. The protein is Enolase of Burkholderia ambifaria (strain MC40-6).